Here is a 519-residue protein sequence, read N- to C-terminus: F-box-like/WD repeat-containing protein TBL1XR1-A (519 aa).

The LisH domain maps to 4 to 36 (SSDEVNFLVYRYLQESGFSHSAFTFGIESHISQ). In terms of domain architecture, F-box-like spans 41–86 (GALAPPAALISIIQKGLQYVEAEVSINEDGTLFDGRPIESLSLIDA). Over residues 115–139 (AAAAAATPNNQQPPAKNGENTANGE) the composition is skewed to low complexity. The segment at 115-147 (AAAAAATPNNQQPPAKNGENTANGEENGGHALA) is disordered. WD repeat units follow at residues 172-211 (GHES…TSGS), 228-267 (PSNK…ASTL), 269-308 (QHKG…AKQQ), 311-349 (FHSA…PIKT), 352-391 (GHTN…CVHD), 394-442 (AHNK…CIHT), 445-484 (KHQE…LVHS), and 486-519 (RGTG…DLRK).

This sequence belongs to the WD repeat EBI family. Interacts with heterodimers of rxra and thrb, and this interaction is abrogated by thyroid hormone binding to thrb. Interacts with ncor1.

It localises to the nucleus. In terms of biological role, F-box-like protein which acts as an integral component of the N-CoR transcriptional corepressor complex. Probably regulates transcription activation mediated by nuclear receptors. May mediate the recruitment of the 19S proteasome complex, leading to the subsequent proteasomal degradation of the N-CoR complex, thereby allowing cofactor exchange and transcription activation. This chain is F-box-like/WD repeat-containing protein TBL1XR1-A (tbl1xr1-a), found in Xenopus laevis (African clawed frog).